Reading from the N-terminus, the 475-residue chain is Ribulose bisphosphate carboxylase large chain (475 aa).

A propeptide spanning residues 1 to 2 (MS) is cleaved from the precursor. Position 3 is an N-acetylproline (Pro3). Lys14 bears the N6,N6,N6-trimethyllysine mark. Asn123 and Thr173 together coordinate substrate. The Proton acceptor role is filled by Lys175. Lys177 is a substrate binding site. Mg(2+) is bound by residues Lys201, Asp203, and Glu204. Lys201 bears the N6-carboxylysine mark. The Proton acceptor role is filled by His294. Arg295, His327, and Ser379 together coordinate substrate.

The protein belongs to the RuBisCO large chain family. Type I subfamily. Heterohexadecamer of 8 large chains and 8 small chains; disulfide-linked. The disulfide link is formed within the large subunit homodimers. It depends on Mg(2+) as a cofactor. The disulfide bond which can form in the large chain dimeric partners within the hexadecamer appears to be associated with oxidative stress and protein turnover.

It localises to the plastid. The protein resides in the chloroplast. It catalyses the reaction 2 (2R)-3-phosphoglycerate + 2 H(+) = D-ribulose 1,5-bisphosphate + CO2 + H2O. It carries out the reaction D-ribulose 1,5-bisphosphate + O2 = 2-phosphoglycolate + (2R)-3-phosphoglycerate + 2 H(+). RuBisCO catalyzes two reactions: the carboxylation of D-ribulose 1,5-bisphosphate, the primary event in carbon dioxide fixation, as well as the oxidative fragmentation of the pentose substrate in the photorespiration process. Both reactions occur simultaneously and in competition at the same active site. The protein is Ribulose bisphosphate carboxylase large chain of Equisetum arvense (Field horsetail).